The sequence spans 309 residues: Aspartate carbamoyltransferase catalytic subunit (309 aa).

The carbamoyl phosphate site is built by Arg55 and Thr56. Lys85 contacts L-aspartate. Residues Arg106, His135, and Gln138 each coordinate carbamoyl phosphate. Positions 168 and 230 each coordinate L-aspartate. The carbamoyl phosphate site is built by Leu268 and Pro269.

Belongs to the aspartate/ornithine carbamoyltransferase superfamily. ATCase family. In terms of assembly, heterododecamer (2C3:3R2) of six catalytic PyrB chains organized as two trimers (C3), and six regulatory PyrI chains organized as three dimers (R2).

It carries out the reaction carbamoyl phosphate + L-aspartate = N-carbamoyl-L-aspartate + phosphate + H(+). The protein operates within pyrimidine metabolism; UMP biosynthesis via de novo pathway; (S)-dihydroorotate from bicarbonate: step 2/3. Its function is as follows. Catalyzes the condensation of carbamoyl phosphate and aspartate to form carbamoyl aspartate and inorganic phosphate, the committed step in the de novo pyrimidine nucleotide biosynthesis pathway. The sequence is that of Aspartate carbamoyltransferase catalytic subunit from Photobacterium profundum (strain SS9).